Consider the following 344-residue polypeptide: tRNA N6-adenosine threonylcarbamoyltransferase (344 aa).

Residues His-111 and His-115 each contribute to the Fe cation site. Residues 134–138 (LVSGG), Asp-167, Gly-180, and Asn-273 contribute to the substrate site. Residue Asp-301 participates in Fe cation binding.

Belongs to the KAE1 / TsaD family. It depends on Fe(2+) as a cofactor.

Its subcellular location is the cytoplasm. The enzyme catalyses L-threonylcarbamoyladenylate + adenosine(37) in tRNA = N(6)-L-threonylcarbamoyladenosine(37) in tRNA + AMP + H(+). In terms of biological role, required for the formation of a threonylcarbamoyl group on adenosine at position 37 (t(6)A37) in tRNAs that read codons beginning with adenine. Is involved in the transfer of the threonylcarbamoyl moiety of threonylcarbamoyl-AMP (TC-AMP) to the N6 group of A37, together with TsaE and TsaB. TsaD likely plays a direct catalytic role in this reaction. The sequence is that of tRNA N6-adenosine threonylcarbamoyltransferase from Cupriavidus taiwanensis (strain DSM 17343 / BCRC 17206 / CCUG 44338 / CIP 107171 / LMG 19424 / R1) (Ralstonia taiwanensis (strain LMG 19424)).